A 230-amino-acid polypeptide reads, in one-letter code: 7-cyano-7-deazaguanine synthase (230 aa).

8–18 (LSGGMDSAVVT) serves as a coordination point for ATP. The Zn(2+) site is built by C186, C196, C199, and C202.

The protein belongs to the QueC family. The cofactor is Zn(2+).

The catalysed reaction is 7-carboxy-7-deazaguanine + NH4(+) + ATP = 7-cyano-7-deazaguanine + ADP + phosphate + H2O + H(+). It participates in purine metabolism; 7-cyano-7-deazaguanine biosynthesis. Functionally, catalyzes the ATP-dependent conversion of 7-carboxy-7-deazaguanine (CDG) to 7-cyano-7-deazaguanine (preQ(0)). The sequence is that of 7-cyano-7-deazaguanine synthase from Xylella fastidiosa (strain M12).